A 121-amino-acid chain; its full sequence is Large ribosomal subunit protein uL18 (121 aa).

It belongs to the universal ribosomal protein uL18 family. In terms of assembly, part of the 50S ribosomal subunit; part of the 5S rRNA/L5/L18/L25 subcomplex. Contacts the 5S and 23S rRNAs.

Its function is as follows. This is one of the proteins that bind and probably mediate the attachment of the 5S RNA into the large ribosomal subunit, where it forms part of the central protuberance. The protein is Large ribosomal subunit protein uL18 of Mesomycoplasma hyopneumoniae (strain J / ATCC 25934 / NCTC 10110) (Mycoplasma hyopneumoniae).